Consider the following 276-residue polypeptide: SKA complex subunit 1 homolog (276 aa).

The stretch at 48–78 forms a coiled coil; sequence VDVSLTAMEAQLQAVRRRLQEEREAFPKAKK.

This sequence belongs to the SKA1 family.

In Oryza sativa subsp. japonica (Rice), this protein is SKA complex subunit 1 homolog.